The following is a 117-amino-acid chain: MKGKKYYSDYHVWIEPIHSRIVKLGLSSQMREHLGNILHIDLPSLGAFIKEGEKLCILESSKSAIEVLSPVSGEVLEVNTALEDDILPVNNATESEGWFVVLQLTEDFRSESFSLEP.

Positions 21–103 constitute a Lipoyl-binding domain; it reads IVKLGLSSQM…ESEGWFVVLQ (83 aa). An N6-lipoyllysine modification is found at K62.

The protein belongs to the GcvH family. (R)-lipoate is required as a cofactor.

The polypeptide is Glycine cleavage system H-like protein (Chlamydia trachomatis serovar D (strain ATCC VR-885 / DSM 19411 / UW-3/Cx)).